The primary structure comprises 1041 residues: Integrator complex subunit 3 (1041 aa).

Methionine 1 carries the N-acetylmethionine modification. Phosphoserine is present on residues serine 500, serine 535, and serine 993. A disordered region spans residues 975 to 1041; that stretch reads YEDSSTKPPK…GSSAVGSDSD (67 aa). The span at 1006-1020 shows a compositional bias: acidic residues; the sequence is AEEESGSSSASEEED.

The protein belongs to the Integrator subunit 3 family. In terms of assembly, component of the Integrator complex, composed of core subunits INTS1, INTS2, INTS3, INTS4, INTS5, INTS6, INTS7, INTS8, INTS9/RC74, INTS10, INTS11/CPSF3L, INTS12, INTS13, INTS14 and INTS15. The core complex associates with protein phosphatase 2A subunits PPP2CA and PPP2R1A, to form the Integrator-PP2A (INTAC) complex. Component of the SOSS complex, composed of SOSS-B (SOSS-B1/NABP2 or SOSS-B2/NABP1), SOSS-A/INTS3 and SOSS-C/INIP. SOSS complexes containing SOSS-B1/NABP2 are more abundant than complexes containing SOSS-B2/NABP1. Interacts with SOSS-B1/NABP2, SOSS-B2/NABP1 and SOSS-C/INIP; the interaction is direct. Interacts with NBN/NBS1.

It localises to the nucleus. The protein resides in the cytoplasm. Functionally, component of the integrator complex, a multiprotein complex that terminates RNA polymerase II (Pol II) transcription in the promoter-proximal region of genes. The integrator complex provides a quality checkpoint during transcription elongation by driving premature transcription termination of transcripts that are unfavorably configured for transcriptional elongation: the complex terminates transcription by (1) catalyzing dephosphorylation of the C-terminal domain (CTD) of Pol II subunit POLR2A/RPB1 and SUPT5H/SPT5, (2) degrading the exiting nascent RNA transcript via endonuclease activity and (3) promoting the release of Pol II from bound DNA. The integrator complex is also involved in terminating the synthesis of non-coding Pol II transcripts, such as enhancer RNAs (eRNAs), small nuclear RNAs (snRNAs), telomerase RNAs and long non-coding RNAs (lncRNAs). Within the integrator complex, INTS3 is involved in the post-termination step: INTS3 binds INTS7 in the open conformation of integrator complex and prevents the rebinding of Pol II to the integrator after termination cycle. Mediates recruitment of cytoplasmic dynein to the nuclear envelope, probably as component of the integrator complex. Component of the SOSS complex, a multiprotein complex that functions downstream of the MRN complex to promote DNA repair and G2/M checkpoint. The SOSS complex associates with single-stranded DNA at DNA lesions and influences diverse endpoints in the cellular DNA damage response including cell-cycle checkpoint activation, recombinational repair and maintenance of genomic stability. The SOSS complex is required for efficient homologous recombination-dependent repair of double-strand breaks (DSBs) and ATM-dependent signaling pathways. In the SOSS complex, it is required for the assembly of the complex and for stabilization of the complex at DNA damage sites. The chain is Integrator complex subunit 3 (Ints3) from Mus musculus (Mouse).